Consider the following 291-residue polypeptide: Acetylglutamate kinase (291 aa).

Substrate is bound by residues 64 to 65, Arg-86, and Asn-190; that span reads GG.

The protein belongs to the acetylglutamate kinase family. ArgB subfamily.

It localises to the cytoplasm. The enzyme catalyses N-acetyl-L-glutamate + ATP = N-acetyl-L-glutamyl 5-phosphate + ADP. It participates in amino-acid biosynthesis; L-arginine biosynthesis; N(2)-acetyl-L-ornithine from L-glutamate: step 2/4. Functionally, catalyzes the ATP-dependent phosphorylation of N-acetyl-L-glutamate. The polypeptide is Acetylglutamate kinase (Leptospira borgpetersenii serovar Hardjo-bovis (strain L550)).